Consider the following 118-residue polypeptide: Putative pterin-4-alpha-carbinolamine dehydratase (118 aa).

It belongs to the pterin-4-alpha-carbinolamine dehydratase family.

It catalyses the reaction (4aS,6R)-4a-hydroxy-L-erythro-5,6,7,8-tetrahydrobiopterin = (6R)-L-erythro-6,7-dihydrobiopterin + H2O. The polypeptide is Putative pterin-4-alpha-carbinolamine dehydratase (Xanthomonas oryzae pv. oryzae (strain PXO99A)).